The following is a 345-amino-acid chain: S-adenosylmethionine:tRNA ribosyltransferase-isomerase (345 aa).

This sequence belongs to the QueA family. Monomer.

It is found in the cytoplasm. The catalysed reaction is 7-aminomethyl-7-carbaguanosine(34) in tRNA + S-adenosyl-L-methionine = epoxyqueuosine(34) in tRNA + adenine + L-methionine + 2 H(+). It functions in the pathway tRNA modification; tRNA-queuosine biosynthesis. Functionally, transfers and isomerizes the ribose moiety from AdoMet to the 7-aminomethyl group of 7-deazaguanine (preQ1-tRNA) to give epoxyqueuosine (oQ-tRNA). The protein is S-adenosylmethionine:tRNA ribosyltransferase-isomerase of Finegoldia magna (strain ATCC 29328 / DSM 20472 / WAL 2508) (Peptostreptococcus magnus).